The following is a 537-amino-acid chain: MRAKQHISDLAHHCIAHGMRHLVISPGSRNAPLIRAFAASSQIECLSIVDERSAAFVALGLATELQAPVGVLCTSGTALLNYGPAIAEAYYLRAPLIVLSADRPARLVGQQDSQTICQDNLFANIVKGSYSLPEEPETVAELELSARVIAQAFSTALSPCFGPVHINIPLDEPLYGGELMAESLIALSPLQLAEPKGMSPALWQEVESAWRGAKRRMIVCGQGVADAELQALLARFAPDKTVTIIAENTANIVGPWLVDRPDAVLLACDEASRSLLAPDCLISFGGHLVAKHIKLLLREFKPAFHFRLDPAQMGIDTYQCLSAELDLAPTTFFRRLAQQVEPAAGFRDLWALPEGVAENQDDEFLVLKRLLGQLPAGSIAHLGNSMSVRHAQKLASRADLLYHSNRGVAGIDGCLSTAVGVALATDQLVLCCLGDLSFVYDSNALWNRNLPSNLRIVILNNQGGDIFRRLKGPSVSPGYQDFFVAHHPVQIGKMIEAYGVAYRRCLASEIDGFSEEFLGLQDGPLVLEVFVDPTKRD.

This sequence belongs to the TPP enzyme family. MenD subfamily. In terms of assembly, homodimer. It depends on Mg(2+) as a cofactor. The cofactor is Mn(2+). Thiamine diphosphate is required as a cofactor.

It carries out the reaction isochorismate + 2-oxoglutarate + H(+) = 5-enolpyruvoyl-6-hydroxy-2-succinyl-cyclohex-3-ene-1-carboxylate + CO2. Its pathway is quinol/quinone metabolism; 1,4-dihydroxy-2-naphthoate biosynthesis; 1,4-dihydroxy-2-naphthoate from chorismate: step 2/7. It participates in quinol/quinone metabolism; menaquinone biosynthesis. Catalyzes the thiamine diphosphate-dependent decarboxylation of 2-oxoglutarate and the subsequent addition of the resulting succinic semialdehyde-thiamine pyrophosphate anion to isochorismate to yield 2-succinyl-5-enolpyruvyl-6-hydroxy-3-cyclohexene-1-carboxylate (SEPHCHC). This chain is 2-succinyl-5-enolpyruvyl-6-hydroxy-3-cyclohexene-1-carboxylate synthase, found in Desulfotalea psychrophila (strain LSv54 / DSM 12343).